A 398-amino-acid polypeptide reads, in one-letter code: 1-deoxy-D-xylulose 5-phosphate reductoisomerase (398 aa).

The NADPH site is built by Thr-11, Gly-12, Ser-13, Ile-14, Arg-38, Asn-39, and Asn-125. Position 126 (Lys-126) interacts with 1-deoxy-D-xylulose 5-phosphate. An NADPH-binding site is contributed by Glu-127. Asp-151 lines the Mn(2+) pocket. Residues Ser-152, Glu-153, Ser-179, and His-202 each contribute to the 1-deoxy-D-xylulose 5-phosphate site. Glu-153 contacts Mn(2+). Residue Gly-208 coordinates NADPH. Residues Ser-215, Asn-220, Lys-221, and Glu-224 each coordinate 1-deoxy-D-xylulose 5-phosphate. Position 224 (Glu-224) interacts with Mn(2+).

It belongs to the DXR family. Mg(2+) is required as a cofactor. The cofactor is Mn(2+).

The catalysed reaction is 2-C-methyl-D-erythritol 4-phosphate + NADP(+) = 1-deoxy-D-xylulose 5-phosphate + NADPH + H(+). It participates in isoprenoid biosynthesis; isopentenyl diphosphate biosynthesis via DXP pathway; isopentenyl diphosphate from 1-deoxy-D-xylulose 5-phosphate: step 1/6. Its function is as follows. Catalyzes the NADPH-dependent rearrangement and reduction of 1-deoxy-D-xylulose-5-phosphate (DXP) to 2-C-methyl-D-erythritol 4-phosphate (MEP). The polypeptide is 1-deoxy-D-xylulose 5-phosphate reductoisomerase (Burkholderia cenocepacia (strain HI2424)).